We begin with the raw amino-acid sequence, 458 residues long: Exodeoxyribonuclease 7 large subunit (458 aa).

The protein belongs to the XseA family. As to quaternary structure, heterooligomer composed of large and small subunits.

It localises to the cytoplasm. It catalyses the reaction Exonucleolytic cleavage in either 5'- to 3'- or 3'- to 5'-direction to yield nucleoside 5'-phosphates.. Bidirectionally degrades single-stranded DNA into large acid-insoluble oligonucleotides, which are then degraded further into small acid-soluble oligonucleotides. The sequence is that of Exodeoxyribonuclease 7 large subunit from Stutzerimonas stutzeri (strain A1501) (Pseudomonas stutzeri).